The following is a 582-amino-acid chain: Multicopper oxidase LPR1 homolog 1 (582 aa).

Residues methionine 1–glycine 20 form the signal peptide. Cu cation-binding residues include histidine 150, histidine 152, histidine 198, and histidine 200. N-linked (GlcNAc...) asparagine glycans are attached at residues asparagine 256, asparagine 300, and asparagine 308. The region spanning proline 285–threonine 354 is the Plastocyanin-like domain. Histidine 467, histidine 470, and histidine 472 together coordinate Cu cation. N-linked (GlcNAc...) asparagine glycosylation occurs at asparagine 504. Histidine 563, cysteine 564, histidine 565, histidine 569, and methionine 574 together coordinate Cu cation.

The protein belongs to the multicopper oxidase family. Requires Cu cation as cofactor. As to expression, highly expressed in roots, and at lower levels in basal stems and leaf blades.

The protein localises to the endoplasmic reticulum membrane. In terms of biological role, multicopper oxidase that may play a role in the maintenance of inorganic phosphate homeostasis. The sequence is that of Multicopper oxidase LPR1 homolog 1 from Oryza sativa subsp. japonica (Rice).